We begin with the raw amino-acid sequence, 175 residues long: MEHVHWWLAGLAFTLGMVLTSTLMVRPVEHQVLVKKSVRGSSAKSKPPTARKPAVKSGTKREESPTAKTKVATESAAEQIPVAGEPAAEPIPVAGEPAARIPVVPYAPYGPGSARAGADGSGPQGWLVKGRSDTRLYYTPEDPTYDPTVAQVWFQDEESAARAFFTPWRKSTRRT.

A helical transmembrane segment spans residues 4-26 (VHWWLAGLAFTLGMVLTSTLMVR). Positions 36–93 (KSVRGSSAKSKPPTARKPAVKSGTKREESPTAKTKVATESAAEQIPVAGEPAAEPIPV) are disordered.

The protein belongs to the ArfC membrane protein family.

The protein resides in the cell membrane. Functionally, required for wild-type expression of ArfA and ammonia secretion. This is an uncharacterized protein from Mycobacterium bovis (strain ATCC BAA-935 / AF2122/97).